A 1357-amino-acid chain; its full sequence is DNA-directed RNA polymerase subunit beta (1357 aa).

The protein belongs to the RNA polymerase beta chain family. The RNAP catalytic core consists of 2 alpha, 1 beta, 1 beta' and 1 omega subunit. When a sigma factor is associated with the core the holoenzyme is formed, which can initiate transcription.

The enzyme catalyses RNA(n) + a ribonucleoside 5'-triphosphate = RNA(n+1) + diphosphate. Its function is as follows. DNA-dependent RNA polymerase catalyzes the transcription of DNA into RNA using the four ribonucleoside triphosphates as substrates. This Pseudomonas aeruginosa (strain UCBPP-PA14) protein is DNA-directed RNA polymerase subunit beta.